We begin with the raw amino-acid sequence, 408 residues long: Bone morphogenetic protein 4 (408 aa).

The first 19 residues, 1–19 (MIPGNRMLMVVLLCQVLLG), serve as a signal peptide directing secretion. A propeptide spanning residues 20–292 (GATDASLIPE…HTLTRRRAKR (273 aa)) is cleaved from the precursor. At S91 the chain carries Phosphoserine. The interval 91-113 (SGEEEEEEQSQGTGLEYPERPAS) is disordered. N-linked (GlcNAc...) asparagine glycosylation is found at N144 and N209. The tract at residues 281 to 307 (RGHTLTRRRAKRSPKHHPQRSRKKNKN) is disordered. The span at 284 to 307 (TLTRRRAKRSPKHHPQRSRKKNKN) shows a compositional bias: basic residues. Cystine bridges form between C308-C373, C337-C405, and C341-C407. Residues N350 and N365 are each glycosylated (N-linked (GlcNAc...) asparagine).

This sequence belongs to the TGF-beta family. Homodimer; disulfide-linked. Interacts with GREM2. Part of a complex consisting of TWSG1 and CHRD. Interacts with the serine proteases, HTRA1 and HTRA3; the interaction with either inhibits BMP4-mediated signaling. The HTRA protease activity is required for this inhibition. Interacts with SOSTDC1. Interacts with FBN1 (via N-terminal domain) and FBN2. Interacts with type I receptor BMPR1A. Interacts with type II receptor BMPR2. Interacts with FSTL1; this interaction inhibits the activation of the BMP4/Smad1/5/8 signaling pathway. Interacts with SCUBE3. Interacts with TGFBR3.

The protein localises to the secreted. The protein resides in the extracellular space. It localises to the extracellular matrix. Functionally, growth factor of the TGF-beta superfamily that plays essential roles in many developmental processes, including neurogenesis, vascular development, angiogenesis and osteogenesis. Acts in concert with PTHLH/PTHRP to stimulate ductal outgrowth during embryonic mammary development and to inhibit hair follicle induction. Initiates the canonical BMP signaling cascade by associating with type I receptor BMPR1A and type II receptor BMPR2. Once all three components are bound together in a complex at the cell surface, BMPR2 phosphorylates and activates BMPR1A. In turn, BMPR1A propagates signal by phosphorylating SMAD1/5/8 that travel to the nucleus and act as activators and repressors of transcription of target genes. Positively regulates the expression of odontogenic development regulator MSX1 via inducing the IPO7-mediated import of SMAD1 to the nucleus. Required for MSX1-mediated mesenchymal molar tooth bud development beyond the bud stage, via promoting Wnt signaling. Acts as a positive regulator of odontoblast differentiation during mesenchymal tooth germ formation, expression is repressed during the bell stage by MSX1-mediated inhibition of CTNNB1 signaling. Able to induce its own expression in dental mesenchymal cells and also in the neighboring dental epithelial cells via an MSX1-mediated pathway. Can also signal through non-canonical BMP pathways such as ERK/MAP kinase, PI3K/Akt, or SRC cascades. For example, induces SRC phosphorylation which, in turn, activates VEGFR2, leading to an angiogenic response. This Rattus norvegicus (Rat) protein is Bone morphogenetic protein 4.